We begin with the raw amino-acid sequence, 474 residues long: Stabilizer of axonemal microtubules 1 (474 aa).

Mn regions lie at residues 30–64, 65–97, 98–131, 132–165, 166–199, 200–232, 233–266, 267–299, 300–332, 333–366, 367–400, and 401–434; these read KPCL…KGPI, PMEG…PSEE, NMDL…PCSD, KMEC…PASV, RFDN…LCNI, PLED…PCEI, PFES…GLDM, PFCN…PPED, RMDL…KKCG, RFEG…LPTE, PLDC…RGNV, and PVES…TFEE. Residues 446-474 are disordered; it reads VSQAGSQQSSHLSVDDSENPNQRELEVLA. Residues 448–457 show a composition bias toward polar residues; sequence QAGSQQSSHL.

The protein belongs to the FAM154 family. Associates with microtubules via the Mn regions. As to expression, widely expressed, with highest levels in testis. Expressed in mature spermatozoa (at protein level).

It localises to the cytoplasm. It is found in the cytoskeleton. The protein resides in the microtubule organizing center. Its subcellular location is the centrosome. The protein localises to the centriole. It localises to the cilium basal body. It is found in the cilium axoneme. The protein resides in the flagellum axoneme. In terms of biological role, may play a role in the regulation of cilium length. Stabilizes microtubules at low temperature. This chain is Stabilizer of axonemal microtubules 1 (SAXO1), found in Homo sapiens (Human).